The following is a 171-amino-acid chain: AP-3 complex subunit sigma (171 aa).

Belongs to the adaptor complexes small subunit family. As to quaternary structure, adaptor protein complex 3 (AP-3) is a heterotetramer composed of two large adaptins (delta-type subunit and beta-type subunit), a medium adaptin (mu-type subunit) and a small adaptin (sigma-type subunit).

Its subcellular location is the endosome membrane. Its function is as follows. Part of the AP-3 complex, an adaptor-related complex which is essential for the compartmentalization of the endocytic pathway. The polypeptide is AP-3 complex subunit sigma (ap3s1) (Dictyostelium discoideum (Social amoeba)).